An 802-amino-acid chain; its full sequence is Probable inactive leucine-rich repeat receptor-like protein kinase At3g03770 (802 aa).

The N-terminal stretch at 1 to 26 is a signal peptide; the sequence is MEKLYCGMPLLLLVLLLASIDGSTQL. Residues 27 to 391 lie on the Extracellular side of the membrane; that stretch reads QSSQSQTLLR…RNKVSKVGIA (365 aa). N-linked (GlcNAc...) asparagine glycosylation is found at Asn52 and Asn83. LRR repeat units follow at residues 71–94, 104–128, 129–152, 153–176, 177–200, 201–225, 227–244, 245–268, 269–293, 294–317, and 319–341; these read EDSV…SFSI, LPDV…INRL, SSLE…LSSL, ATLQ…IDSL, PSLA…LSSL, SGLR…HLTN, QVLD…PRLS, NKLV…EVSS, LYQL…LMSL, PAIT…LSCN, and QLMF…LKPS. Asn135 carries an N-linked (GlcNAc...) asparagine glycan. Asn190 carries an N-linked (GlcNAc...) asparagine glycan. Residues Asn300 and Asn313 are each glycosylated (N-linked (GlcNAc...) asparagine). A helical transmembrane segment spans residues 392–412; it reads LGVTASILGVLLLAGALFVVL. The Cytoplasmic segment spans residues 413–802; sequence RRLNAKKTVT…RDSGCEEHER (390 aa). The Protein kinase domain occupies 477–759; sequence FESSAFMGEG…FASQVQEGWL (283 aa). The disordered stretch occupies residues 761 to 802; the sequence is NSNPSSNLGSPSPAASSLPPPSRLHVTTLESPRDSGCEEHER. The span at 762 to 777 shows a compositional bias: low complexity; the sequence is SNPSSNLGSPSPAASS. Positions 791 to 802 are enriched in basic and acidic residues; that stretch reads SPRDSGCEEHER.

The protein belongs to the protein kinase superfamily. Ser/Thr protein kinase family.

It is found in the cell membrane. The chain is Probable inactive leucine-rich repeat receptor-like protein kinase At3g03770 from Arabidopsis thaliana (Mouse-ear cress).